Reading from the N-terminus, the 445-residue chain is DNA polymerase IV (445 aa).

Positions 49 to 229 constitute a UmuC domain; sequence LAHVDCDAFY…KPVGMIWGVG (181 aa). The Mg(2+) site is built by D53 and D146. E147 is an active-site residue.

This sequence belongs to the DNA polymerase type-Y family. As to quaternary structure, monomer. Requires Mg(2+) as cofactor.

It localises to the cytoplasm. It catalyses the reaction DNA(n) + a 2'-deoxyribonucleoside 5'-triphosphate = DNA(n+1) + diphosphate. In terms of biological role, poorly processive, error-prone DNA polymerase involved in untargeted mutagenesis. Copies undamaged DNA at stalled replication forks, which arise in vivo from mismatched or misaligned primer ends. These misaligned primers can be extended by PolIV. Exhibits no 3'-5' exonuclease (proofreading) activity. May be involved in translesional synthesis, in conjunction with the beta clamp from PolIII. The polypeptide is DNA polymerase IV (Brucella melitensis biotype 1 (strain ATCC 23456 / CCUG 17765 / NCTC 10094 / 16M)).